The chain runs to 189 residues: UPF0301 protein PputW619_0469 (189 aa).

Belongs to the UPF0301 (AlgH) family.

This is UPF0301 protein PputW619_0469 from Pseudomonas putida (strain W619).